We begin with the raw amino-acid sequence, 194 residues long: Ras-related protein Rab-22A (194 aa).

GTP is bound at residue 12–20 (GDTGVGKSS). Positions 34 to 42 (INPTIGASF) match the Effector region motif. GTP contacts are provided by residues 60-64 (DTAGQ), 118-121 (NKCD), and 148-150 (SAK). The tract at residues 174-194 (PSGGKGFKLRRQPSEPKRSCC) is disordered. Positions 185-194 (QPSEPKRSCC) are enriched in basic and acidic residues. 2 S-geranylgeranyl cysteine lipidation sites follow: Cys193 and Cys194.

This sequence belongs to the small GTPase superfamily. Rab family. Interacts directly with ZFYVE20. Binds EEA1. Interacts (in its GTP-bound form) with RABGEF1. Interacts (in its GTP-bound form) with RINL.

The protein resides in the endosome membrane. Its subcellular location is the cell membrane. The protein localises to the early endosome. It localises to the late endosome. It is found in the cell projection. The protein resides in the ruffle. Its subcellular location is the cytoplasmic vesicle. The protein localises to the phagosome. It localises to the phagosome membrane. Plays a role in endocytosis and intracellular protein transport. Mediates trafficking of TF from early endosomes to recycling endosomes. Required for NGF-mediated endocytosis of NTRK1, and subsequent neurite outgrowth. Binds GTP and GDP and has low GTPase activity. Alternates between a GTP-bound active form and a GDP-bound inactive form. This Homo sapiens (Human) protein is Ras-related protein Rab-22A (RAB22A).